A 249-amino-acid chain; its full sequence is MSFIVYPAIDIRGGKCVRLFQGDYGQETVYADSPLAMAKRWVEQGASWVHLVDLDGAKEGKPANAAIIKEIARSIPVPVQVGGGIRTEEQIADYLEAGVARVIVGTAAIEDEPFTKRILQNDGDKIAIGLDCRNGLVATRGWLTTTDVQATELAKRLVTYGAETFIYTDIARDGTMTGPNVEEIAALAMATGKSVIASGGVSQLDDLLTLATHASDGVSGAIVGKALYTDAFTLEEALQRMEGRESYAG.

The active-site Proton acceptor is D10. The active-site Proton donor is D131.

The protein belongs to the HisA/HisF family.

Its subcellular location is the cytoplasm. The catalysed reaction is 1-(5-phospho-beta-D-ribosyl)-5-[(5-phospho-beta-D-ribosylamino)methylideneamino]imidazole-4-carboxamide = 5-[(5-phospho-1-deoxy-D-ribulos-1-ylimino)methylamino]-1-(5-phospho-beta-D-ribosyl)imidazole-4-carboxamide. The protein operates within amino-acid biosynthesis; L-histidine biosynthesis; L-histidine from 5-phospho-alpha-D-ribose 1-diphosphate: step 4/9. This is 1-(5-phosphoribosyl)-5-[(5-phosphoribosylamino)methylideneamino] imidazole-4-carboxamide isomerase from Brevibacillus brevis (strain 47 / JCM 6285 / NBRC 100599).